The chain runs to 177 residues: MSRVAKMPVAIPEGVEIAIKDTQINVKGALGALALAQNAHVVIASNDGKLTFVPANDSRQANAMSGTMRQLVNNMVVGVTKGFQKKLNLVGVGFKAQAQGDKLNLTVGYSHPVVMAMPAGITVATPTPTEVVIKGSDRQRVGQIAAEVRAVRPPEPYKGKGIRYSDEKITIKETKKK.

The protein belongs to the universal ribosomal protein uL6 family. In terms of assembly, part of the 50S ribosomal subunit.

Its function is as follows. This protein binds to the 23S rRNA, and is important in its secondary structure. It is located near the subunit interface in the base of the L7/L12 stalk, and near the tRNA binding site of the peptidyltransferase center. The sequence is that of Large ribosomal subunit protein uL6 from Polaromonas naphthalenivorans (strain CJ2).